A 481-amino-acid chain; its full sequence is MRLSPRAALSSPEIICSRCSQSCNNKELGIRIPRPLGQGPSRFVPEEEILQLASEDANMHSVFADAFTDLGRLDNITLVMVFHPQYLESFLKTQHYLLQMDGPLSPCYQHYIGIMAASRHQCSYLVNLHVNDFIHHGGDQKWLNGLENAPQKLRNLGELNKMLAHRPWLITKEHIKQLLKAGEHSWSLAELIHAIVLLAHYHSLASFTFGCGINPEIHSNGGHTFRPPSVSNYCICDITNGNHGTEGHLPVGIVMPTDSTCEVEALMVKMKQLQEGRDEEEASQEEMATRFEREKTESMVFSTEDEDPPPDIDVSRHFEDTSYGYKDFSRRGMHVPTFRVQDYSWEDHGYSLVNRLYPDVGQLLDEKFHIAYNLTYNTMAMHKDVDTSTLRRAVWNYVHCMFGIRYDDYDYGEINQLLDRSFKVYIKNVVCSPEKTSKRMYDGFWRQFKHSEKVHVNLLLMEARMQGELLYALRAITRYMT.

The tract at residues 63–244 (FADAFTDLGR…ICDITNGNHG (182 aa)) is N-terminal domain; may mediate the alkylhydroperoxide reductase activity. Residue Cys-122 is the Cysteine sulfenic acid (-SOH) intermediate of the active site. Positions 295 to 316 (KTESMVFSTEDEDPPPDIDVSR) are disordered. Residues 310–481 (PDIDVSRHFE…ALRAITRYMT (172 aa)) form a C-terminal domain; mediates TORC1 regulation region. Residues 375–378 (TYNT), Thr-387, and Glu-452 contribute to the L-leucine site.

Belongs to the sestrin family.

The protein resides in the nucleus. It localises to the cytoplasm. It catalyses the reaction a hydroperoxide + L-cysteinyl-[protein] = S-hydroxy-L-cysteinyl-[protein] + an alcohol. Functionally, may function as an intracellular leucine sensor that negatively regulates the TORC1 signaling pathway through the GATOR complex. In absence of leucine, binds the GATOR subcomplex GATOR2 and prevents TORC1 signaling. Binding of leucine to SESN2 disrupts its interaction with GATOR2 thereby activating the TORC1 signaling pathway. This stress-inducible metabolic regulator may also play a role in protection against oxidative and genotoxic stresses. May prevent the accumulation of reactive oxygen species (ROS) through the alkylhydroperoxide reductase activity born by the N-terminal domain of the protein. This is Sestrin-1 from Xenopus laevis (African clawed frog).